Reading from the N-terminus, the 424-residue chain is Serine/threonine-protein kinase H1 (424 aa).

Gly-2 is lipidated: N-myristoyl glycine. Residue Cys-3 is the site of S-palmitoyl cysteine attachment. Residues 59–79 (APPCPGVPNTGHTAPPSEPPR) form a disordered region. A Protein kinase domain is found at 98 to 355 (YDIKALIGRG…ALQALRHPWV (258 aa)). ATP-binding positions include 104-112 (IGRGSFSRV) and Lys-127. The active-site Proton acceptor is the Asp-218. Residues 378–408 (RASSRCQSTKSSQSTRSSRSTRSNKSRRVRE) are disordered. A phosphoserine; by autocatalysis mark is found at Ser-380 and Ser-381. Positions 381-398 (SRCQSTKSSQSTRSSRST) are enriched in low complexity.

This sequence belongs to the protein kinase superfamily. CAMK Ser/Thr protein kinase family. Homodimer. In terms of processing, autophosphorylated on serine residues. Post-translationally, myristoylated. Required for membrane association. Prerequisite for palmitoylation to occur. Palmitoylated.

Its subcellular location is the golgi apparatus. It localises to the cytoplasm. The protein localises to the cytoskeleton. It is found in the microtubule organizing center. The protein resides in the centrosome. Its subcellular location is the nucleus speckle. It localises to the endoplasmic reticulum membrane. The protein localises to the cell membrane. The catalysed reaction is L-seryl-[protein] + ATP = O-phospho-L-seryl-[protein] + ADP + H(+). The enzyme catalyses L-threonyl-[protein] + ATP = O-phospho-L-threonyl-[protein] + ADP + H(+). With respect to regulation, activity depends on Ca(2+) concentration. In terms of biological role, serine/threonine protein kinase that may be involved in the regulation of pre-mRNA processing. It may phosphorylate components of nuclear splice factor compartments (SFC), such as non-snRNP splicing factors containing a serine/arginine-rich domain (SR proteins). Reversible phosphorylation of SR proteins may cause their release into the nucleoplasm and change their local concentration, thereby influencing alternative splicing. This chain is Serine/threonine-protein kinase H1 (Pskh1), found in Mus musculus (Mouse).